Here is a 496-residue protein sequence, read N- to C-terminus: UDP-glycosyltransferase 73C2 (496 aa).

UDP-alpha-D-glucose contacts are provided by residues S297, 357–359 (SPQ), 374–382 (HCGWNSTLE), and 396–399 (FGDQ).

Belongs to the UDP-glycosyltransferase family.

The polypeptide is UDP-glycosyltransferase 73C2 (UGT73C2) (Arabidopsis thaliana (Mouse-ear cress)).